Here is a 185-residue protein sequence, read N- to C-terminus: Large ribosomal subunit protein uL30 (185 aa).

Belongs to the universal ribosomal protein uL30 family. Part of the 50S ribosomal subunit.

This is Large ribosomal subunit protein uL30 from Caldivirga maquilingensis (strain ATCC 700844 / DSM 13496 / JCM 10307 / IC-167).